A 469-amino-acid chain; its full sequence is 6-phospho-beta-galactosidase (469 aa).

D-galactose 6-phosphate contacts are provided by Gln-19, His-116, Asn-159, Glu-160, and Asn-297. The active-site Proton donor is Glu-160. Glu-375 (nucleophile) is an active-site residue. D-galactose 6-phosphate contacts are provided by Ser-428, Trp-429, Lys-435, and Tyr-437.

The protein belongs to the glycosyl hydrolase 1 family.

The catalysed reaction is a 6-phospho-beta-D-galactoside + H2O = D-galactose 6-phosphate + an alcohol. It functions in the pathway carbohydrate metabolism; lactose degradation; D-galactose 6-phosphate and beta-D-glucose from lactose 6-phosphate: step 1/1. This is 6-phospho-beta-galactosidase from Streptococcus equi subsp. zooepidemicus (strain MGCS10565).